A 416-amino-acid polypeptide reads, in one-letter code: CCA-adding enzyme (416 aa).

2 residues coordinate ATP: Ser-42 and Lys-45. Residues Ser-42 and Lys-45 each contribute to the CTP site. The Mg(2+) site is built by Asp-54, Asp-56, and Asp-107. The ATP site is built by His-130, Lys-150, and Tyr-159. His-130, Lys-150, and Tyr-159 together coordinate CTP.

Belongs to the tRNA nucleotidyltransferase/poly(A) polymerase family. Archaeal CCA-adding enzyme subfamily. As to quaternary structure, homodimer. It depends on Mg(2+) as a cofactor.

It carries out the reaction a tRNA precursor + 2 CTP + ATP = a tRNA with a 3' CCA end + 3 diphosphate. The enzyme catalyses a tRNA with a 3' CCA end + 2 CTP + ATP = a tRNA with a 3' CCACCA end + 3 diphosphate. Functionally, catalyzes the addition and repair of the essential 3'-terminal CCA sequence in tRNAs without using a nucleic acid template. Adds these three nucleotides in the order of C, C, and A to the tRNA nucleotide-73, using CTP and ATP as substrates and producing inorganic pyrophosphate. tRNA 3'-terminal CCA addition is required both for tRNA processing and repair. Also involved in tRNA surveillance by mediating tandem CCA addition to generate a CCACCA at the 3' terminus of unstable tRNAs. While stable tRNAs receive only 3'-terminal CCA, unstable tRNAs are marked with CCACCA and rapidly degraded. The sequence is that of CCA-adding enzyme from Sulfolobus acidocaldarius (strain ATCC 33909 / DSM 639 / JCM 8929 / NBRC 15157 / NCIMB 11770).